Reading from the N-terminus, the 609-residue chain is Glutamine--fructose-6-phosphate aminotransferase [isomerizing] (609 aa).

Residue Cys-2 is the Nucleophile; for GATase activity of the active site. In terms of domain architecture, Glutamine amidotransferase type-2 spans 2 to 219 (CGIVAAVTQR…EGDIAIVARK (218 aa)). SIS domains lie at 288-428 (ENNI…SKKE) and 460-599 (MANT…IDQP). The For Fru-6P isomerization activity role is filled by Lys-604.

In terms of assembly, homodimer.

Its subcellular location is the cytoplasm. The enzyme catalyses D-fructose 6-phosphate + L-glutamine = D-glucosamine 6-phosphate + L-glutamate. Catalyzes the first step in hexosamine metabolism, converting fructose-6P into glucosamine-6P using glutamine as a nitrogen source. The polypeptide is Glutamine--fructose-6-phosphate aminotransferase [isomerizing] (Buchnera aphidicola subsp. Acyrthosiphon pisum (strain APS) (Acyrthosiphon pisum symbiotic bacterium)).